Here is a 421-residue protein sequence, read N- to C-terminus: 3-alpha-mycarosylerythronolide B desosaminyl transferase (421 aa).

A signal peptide spans 1 to 23 (MRVVFSSMASKSHLFGLVPLAWA).

The protein belongs to the glycosyltransferase 28 family. Heterotetramer composed of EryCII and EryCIII.

The enzyme catalyses 3-O-alpha-L-mycarosylerythronolide B + dTDP-alpha-D-desosamine = erythromycin D + dTDP + H(+). The protein operates within antibiotic biosynthesis; erythromycin biosynthesis. Its function is as follows. Catalyzes the conversion of alpha-L-mycarosylerythronolide B into erythromycin D in the erythromycin biosynthesis pathway. The protein is 3-alpha-mycarosylerythronolide B desosaminyl transferase (eryCIII) of Saccharopolyspora erythraea (strain ATCC 11635 / DSM 40517 / JCM 4748 / NBRC 13426 / NCIMB 8594 / NRRL 2338).